The chain runs to 229 residues: Ion-translocating oxidoreductase complex subunit E (229 aa).

5 helical membrane-spanning segments follow: residues 58-78 (LGLG…ISLF), 82-102 (IPHD…VTTI), 105-125 (LMNA…PLIV), 147-167 (AFDG…LGAI), and 201-221 (GLLL…ILAV).

It belongs to the NqrDE/RnfAE family. As to quaternary structure, the complex is composed of six subunits: RnfA, RnfB, RnfC, RnfD, RnfE and RnfG.

It localises to the cell inner membrane. Part of a membrane-bound complex that couples electron transfer with translocation of ions across the membrane. The chain is Ion-translocating oxidoreductase complex subunit E from Glaesserella parasuis serovar 5 (strain SH0165) (Haemophilus parasuis).